We begin with the raw amino-acid sequence, 176 residues long: MFLIITRDTMFFTAMKNILSKGNVVHIQNEEEIDVMLHQNAFVIIDTLMNNVFHSNFLTQIERLKPVHVIIFSPFNIKRCLGKVPVTFVPRTIAIIDFVALINGSYCSVPEADVSLSRKQHQVLSCIANQMTTEDILEKLKISLKTFYCHKHNIMMILNLKRINELVRHQHINYLV.

The HTH luxR-type domain maps to 109 to 174 (VPEADVSLSR…ELVRHQHINY (66 aa)). Residues 133 to 152 (TEDILEKLKISLKTFYCHKH) constitute a DNA-binding region (H-T-H motif).

Its function is as follows. May act as a transcriptional regulator of dctA. This is HTH-type transcriptional regulator DctR (dctR) from Escherichia coli O6:H1 (strain CFT073 / ATCC 700928 / UPEC).